The following is a 190-amino-acid chain: Potassium-transporting ATPase KdpC subunit (190 aa).

Residues 10-30 (TFIFLLLITGGVYPLLTTALG) form a helical membrane-spanning segment.

Belongs to the KdpC family. As to quaternary structure, the system is composed of three essential subunits: KdpA, KdpB and KdpC.

It localises to the cell inner membrane. Part of the high-affinity ATP-driven potassium transport (or Kdp) system, which catalyzes the hydrolysis of ATP coupled with the electrogenic transport of potassium into the cytoplasm. This subunit acts as a catalytic chaperone that increases the ATP-binding affinity of the ATP-hydrolyzing subunit KdpB by the formation of a transient KdpB/KdpC/ATP ternary complex. The polypeptide is Potassium-transporting ATPase KdpC subunit (Escherichia coli O9:H4 (strain HS)).